A 130-amino-acid chain; its full sequence is Splicing regulatory small protein (130 aa).

The segment covering 1-10 (MRTKPQRPRA) has biased composition (basic residues). Disordered regions lie at residues 1-29 (MRTK…EETG) and 74-130 (GRAL…STRR). Positions 16-22 (GQPCGSP) are mediates interaction with SRSF3. Over residues 77 to 98 (LEPKADPHTCPYGRKESRGEKV) the composition is skewed to basic and acidic residues. The span at 120–130 (SLKSGSPSTRR) shows a compositional bias: polar residues.

As to quaternary structure, interacts with SRSF3; increases SRSF3 binding to specific exons.

The protein resides in the nucleus. Functionally, interacts with the splicing factor SRSF3 and increases its binding to specific exons within pre-mRNA, thereby regulating exon-inclusion during alternative splicing. Does not directly bind pre-mRNA and could regulate a wider range of splicing factors through a similar mechanism. This Homo sapiens (Human) protein is Splicing regulatory small protein.